Consider the following 559-residue polypeptide: Asparagine--tRNA ligase, cytoplasmic (559 aa).

S72 carries the post-translational modification Phosphoserine. Positions 82-102 (HREQMKNDSREKKEAEDNLRR) are disordered. K255 bears the N6-acetyllysine mark. At S493 the chain carries Phosphoserine. N6-acetyllysine is present on K501.

The protein belongs to the class-II aminoacyl-tRNA synthetase family. In terms of assembly, homodimer.

The protein localises to the cytoplasm. The enzyme catalyses tRNA(Asn) + L-asparagine + ATP = L-asparaginyl-tRNA(Asn) + AMP + diphosphate + H(+). In terms of biological role, catalyzes the attachment of asparagine to tRNA(Asn) in a two-step reaction: asparagine is first activated by ATP to form Asn-AMP and then transferred to the acceptor end of tRNA(Asn). In addition to its essential role in protein synthesis, acts as a signaling molecule that induced migration of CCR3-expressing cells. Has an essential role in the development of the cerebral cortex, being required for proper proliferation of radial glial cells. The chain is Asparagine--tRNA ligase, cytoplasmic from Mus musculus (Mouse).